The following is a 193-amino-acid chain: Potassium-transporting ATPase KdpC subunit (193 aa).

The helical transmembrane segment at 7–27 (PMIVIFAVLAALTGLAYPAVM) threads the bilayer.

Belongs to the KdpC family. The system is composed of three essential subunits: KdpA, KdpB and KdpC.

The protein resides in the cell inner membrane. Its function is as follows. Part of the high-affinity ATP-driven potassium transport (or Kdp) system, which catalyzes the hydrolysis of ATP coupled with the electrogenic transport of potassium into the cytoplasm. This subunit acts as a catalytic chaperone that increases the ATP-binding affinity of the ATP-hydrolyzing subunit KdpB by the formation of a transient KdpB/KdpC/ATP ternary complex. In Paraburkholderia phymatum (strain DSM 17167 / CIP 108236 / LMG 21445 / STM815) (Burkholderia phymatum), this protein is Potassium-transporting ATPase KdpC subunit.